We begin with the raw amino-acid sequence, 163 residues long: NF-kappa-B inhibitor-interacting Ras-like protein 2 (163 aa).

The tract at residues 1–163 (MGKSCKVVIC…SANWNLHPDH (163 aa)) is small GTPase-like. 11-18 (GQHGVGKT) is a binding site for GTP. The Effector region motif lies at 35 to 43 (MIETQEDIY). Residues 61 to 65 (DTRGL) and 120 to 123 (NKSD) contribute to the GTP site.

This sequence belongs to the small GTPase superfamily. Ras family. KappaB-Ras subfamily.

It localises to the cytoplasm. Functionally, atypical Ras-like protein that acts as a potent regulator of NF-kappa-B activity by preventing the degradation of NF-kappa-B inhibitor beta (NFKBIB) by most signals, explaining why NFKBIB is more resistant to degradation. This Xenopus laevis (African clawed frog) protein is NF-kappa-B inhibitor-interacting Ras-like protein 2 (nkiras2).